The primary structure comprises 757 residues: Endonuclease MutS2 (757 aa).

Residue 321–328 (GPNMGGKT) participates in ATP binding. Residues 681–756 (IDIRGMTVEE…GTGVTVVEVK (76 aa)) form the Smr domain.

This sequence belongs to the DNA mismatch repair MutS family. MutS2 subfamily. As to quaternary structure, homodimer. Binds to stalled ribosomes, contacting rRNA. Interacts with MutL.

Its activity is regulated as follows. Nuclease activity is stimulated by interaction with MutL and inhibited in the presence of non-hydrolytic ATP (ADPnP). ATPase activity is stimulated by DNA. Its function is as follows. Endonuclease that is involved in the suppression of homologous recombination and thus may have a key role in the control of bacterial genetic diversity. Has ATPase activity. Binds to DNA. In terms of biological role, acts as a ribosome collision sensor, splitting the ribosome into its 2 subunits. Detects stalled/collided 70S ribosomes which it binds and splits by an ATP-hydrolysis driven conformational change. Acts upstream of the ribosome quality control system (RQC), a ribosome-associated complex that mediates the extraction of incompletely synthesized nascent chains from stalled ribosomes and their subsequent degradation. Probably generates substrates for RQC. In Thermotoga maritima (strain ATCC 43589 / DSM 3109 / JCM 10099 / NBRC 100826 / MSB8), this protein is Endonuclease MutS2.